The following is a 330-amino-acid chain: Transcription factor TGA2 (330 aa).

The segment at 1–48 (MADTSPRTDVSTDDDTDHPDLGSEGALVNTAASDSSDRSKGKMDQKTL) is disordered. Positions 35–47 (SSDRSKGKMDQKT) are enriched in basic and acidic residues. The 64-residue stretch at 44–107 (DQKTLRRLAQ…GTGDQAHSTG (64 aa)) folds into the bZIP domain. Coiled-coil stretches lie at residues 45 to 142 (QKTL…HAGD) and 217 to 244 (INNLQQTSQQAEDALSQGMESLQQSLAD). A basic motif region spans residues 46–66 (KTLRRLAQNREAARKSRLRKK). Residues 72-86 (LENSRLKLTQLEQEL) are leucine-zipper. The DOG1 domain maps to 111–327 (ALAFDAEHSR…RALSSLWLAR (217 aa)).

It belongs to the bZIP family. Binds DNA as a dimer. Interacts with NPR1, NPR3 and NPR4. Interacts with GRXC7/ROXY1 and GRXC9/GRX480. As to expression, expressed in the whole plant.

It is found in the nucleus. Its function is as follows. Transcriptional activator that binds specifically to the DNA sequence 5'-TGACG-3'. Recognizes ocs elements like the as-1 motif of the cauliflower mosaic virus 35S promoter. Binding to the as-1-like cis elements mediate auxin- and salicylic acid-inducible transcription. Required to induce the systemic acquired resistance (SAR) via the regulation of pathogenesis-related genes expression. Binding to the as-1 element of PR-1 promoter is salicylic acid-inducible and mediated by NPR1. Could also bind to the C-boxes (5'-ATGACGTCAT-3') with high affinity. This Arabidopsis thaliana (Mouse-ear cress) protein is Transcription factor TGA2 (TGA2).